Consider the following 661-residue polypeptide: Probable urea active transporter 3 (661 aa).

15 consecutive transmembrane segments (helical) span residues glycine 13–leucine 33, glycine 56–alanine 76, glycine 86–leucine 106, alanine 132–glycine 152, valine 165–leucine 185, valine 197–isoleucine 217, alanine 251–serine 271, tyrosine 288–leucine 308, alanine 352–phenylalanine 372, valine 397–asparagine 417, isoleucine 419–phenylalanine 439, glycine 454–cysteine 474, valine 495–phenylalanine 515, isoleucine 556–methionine 576, and tryptophan 591–leucine 611.

This sequence belongs to the sodium:solute symporter (SSF) (TC 2.A.21) family.

It is found in the membrane. It localises to the golgi apparatus membrane. Its function is as follows. Involved in active transport of urea. The sequence is that of Probable urea active transporter 3 (dur3-3) from Schizosaccharomyces pombe (strain 972 / ATCC 24843) (Fission yeast).